A 144-amino-acid polypeptide reads, in one-letter code: Large ribosomal subunit protein uL15 (144 aa).

Positions 1–14 (MVVRREKKSRKMRG) are enriched in basic residues. Residues 1–35 (MVVRREKKSRKMRGSRTMGWGIRGQHRDRGSQGGR) form a disordered region.

Belongs to the universal ribosomal protein uL15 family. Part of the 50S ribosomal subunit.

Functionally, binds to the 23S rRNA. This is Large ribosomal subunit protein uL15 from Saccharolobus solfataricus (strain ATCC 35092 / DSM 1617 / JCM 11322 / P2) (Sulfolobus solfataricus).